The following is a 380-amino-acid chain: Lipid-A-disaccharide synthase (380 aa).

This sequence belongs to the LpxB family.

It catalyses the reaction a lipid X + a UDP-2-N,3-O-bis[(3R)-3-hydroxyacyl]-alpha-D-glucosamine = a lipid A disaccharide + UDP + H(+). It functions in the pathway bacterial outer membrane biogenesis; LPS lipid A biosynthesis. In terms of biological role, condensation of UDP-2,3-diacylglucosamine and 2,3-diacylglucosamine-1-phosphate to form lipid A disaccharide, a precursor of lipid A, a phosphorylated glycolipid that anchors the lipopolysaccharide to the outer membrane of the cell. This is Lipid-A-disaccharide synthase from Vibrio vulnificus (strain CMCP6).